A 156-amino-acid polypeptide reads, in one-letter code: MPRRREVPKREILPDPKFGNVEVAKFMNVLMLDGKKSVAERIVYGAFDQIEKKAGKAPIEVFTLAIGNIKPVVEVKSRRVGGANYQVPVEVRPSRRLALAMRWLREAAKKRSEKSMALRLAGELLEASEGRGGAMKKRDEVHRMAEANKAFSHFRF.

This sequence belongs to the universal ribosomal protein uS7 family. As to quaternary structure, part of the 30S ribosomal subunit. Contacts proteins S9 and S11.

One of the primary rRNA binding proteins, it binds directly to 16S rRNA where it nucleates assembly of the head domain of the 30S subunit. Is located at the subunit interface close to the decoding center, probably blocks exit of the E-site tRNA. The polypeptide is Small ribosomal subunit protein uS7 (Ralstonia nicotianae (strain ATCC BAA-1114 / GMI1000) (Ralstonia solanacearum)).